The primary structure comprises 456 residues: Tyrosine phenol-lyase (456 aa).

Lys257 bears the N6-(pyridoxal phosphate)lysine mark.

It belongs to the beta-eliminating lyase family. In terms of assembly, homotetramer. The cofactor is pyridoxal 5'-phosphate.

The catalysed reaction is L-tyrosine + H2O = phenol + pyruvate + NH4(+). In Citrobacter freundii, this protein is Tyrosine phenol-lyase (tpl).